Reading from the N-terminus, the 55-residue chain is Variant surface glycoprotein ETAT 1.2 (55 aa).

N-linked (GlcNAc...) asparagine glycosylation occurs at Asn34. Residue Asn38 is the site of GPI-anchor amidated asparagine attachment. Positions 39–55 (NSFAIKTSTLLLAVLLF) are cleaved as a propeptide — removed in mature form.

It is found in the cell membrane. Functionally, VSG forms a coat on the surface of the parasite. The trypanosome evades the immune response of the host by expressing a series of antigenically distinct VSGs from an estimated 1000 VSG genes. The sequence is that of Variant surface glycoprotein ETAT 1.2 from Trypanosoma brucei rhodesiense.